Here is a 227-residue protein sequence, read N- to C-terminus: Enolase-phosphatase E1 (227 aa).

It belongs to the HAD-like hydrolase superfamily. MasA/MtnC family. Monomer. It depends on Mg(2+) as a cofactor.

The enzyme catalyses 5-methylsulfanyl-2,3-dioxopentyl phosphate + H2O = 1,2-dihydroxy-5-(methylsulfanyl)pent-1-en-3-one + phosphate. It participates in amino-acid biosynthesis; L-methionine biosynthesis via salvage pathway; L-methionine from S-methyl-5-thio-alpha-D-ribose 1-phosphate: step 3/6. Its pathway is amino-acid biosynthesis; L-methionine biosynthesis via salvage pathway; L-methionine from S-methyl-5-thio-alpha-D-ribose 1-phosphate: step 4/6. Functionally, bifunctional enzyme that catalyzes the enolization of 2,3-diketo-5-methylthiopentyl-1-phosphate (DK-MTP-1-P) into the intermediate 2-hydroxy-3-keto-5-methylthiopentenyl-1-phosphate (HK-MTPenyl-1-P), which is then dephosphorylated to form the acireductone 1,2-dihydroxy-3-keto-5-methylthiopentene (DHK-MTPene). This is Enolase-phosphatase E1 from Methylococcus capsulatus (strain ATCC 33009 / NCIMB 11132 / Bath).